Reading from the N-terminus, the 723-residue chain is MIKHRPHGIEHPYAVSPDQRVPVLPLAGEPVLLGVVAPEADRVVCEWGTLELPLSATSAAAADAAALAGGEGHLSEAQAKSLGADGAWSVQTPPLAEPVKYRFHAHRGGAAESTEWFEVSPAVWTADGVGEVRGGGERVRGVEWLVSSQGVHRGRFRLQLQDGDRLVGFGERYDALDQRGRELDAVVFEQYKAQGVHGRTYLPMPFAHVVGADGNGWGFHVRTSRRTWYSSAGNELTVEVALGDEPVVDLAIYEGDPATVLTGFLDEVGRAEELPGWVFRLWASGNEWNTQQLVTARMDTHRDLAIPVGAVVIEAWSDEQGITIWRDAVYAVTEDGSAHRAEDFSYRPDGAWPDPKAMIDELHARGIKVILWQIPLQKTEFSTGQVAADAAAMVRDGHAVLEADGTAYRNRGWWFPQALMPDLSVQRTRDWWTEKRRYLVEHFDVDGFKTDGGEHAWGHDLVYADGRKGDEGNNLYPVHYARAFGDLLRSAGKAPVTFSRAGFTGSQAHGIFWAGDEDSTWQAFRSSVTAGLTAASCGIVYWGWDLAGFSGPVPDAELYLRAAAASAFMPIMQYHSEFNHHQLPLRDRTPWHVAETTGDDRVVPLFRRFATLRESLVPYLTEQAARTIATDRPLMRPLFFDHENDPEIWNHPYQYLLGDELLINPVLEPGATTWTTYLPAGEWIDVWTGDRVPSGLVTRDVPLEVVPVYCRASRWSELQPVFS.

D451 (nucleophile) is an active-site residue. E454 is a catalytic residue. The active-site Proton donor is D516. H581 lines the substrate pocket.

This sequence belongs to the glycosyl hydrolase 31 family.

The protein resides in the cytoplasm. The catalysed reaction is cyclobis-(1-&gt;3)-alpha-D-isomaltosyl + 2 H2O = 2 isomaltose. In terms of biological role, involved in the intracellular degradation of the cyclic tetrasaccharide cyclobis-(1-6)-alpha-nigerosyl (CNN) formed extracellularly from starch. Catalyzes the hydrolysis of the alpha-1,3-glucosidic linkage of cyclobis-(1-6)-alpha-nigerosyl (CNN) to yield isomaltose via a possible linear tetrasaccharide. It has a strong preference for the alpha-(1-3)-isomaltosyl moiety. In Kribbella flavida (strain DSM 17836 / JCM 10339 / NBRC 14399), this protein is 1,3-alpha-isomaltosidase.